The chain runs to 509 residues: Activin receptor type-1 (509 aa).

A signal peptide spans 1–20 (MVDGVMILPVLIMIALPSPS). Residues 21–123 (MEDEKPKVNP…FPGTQNFHLE (103 aa)) lie on the Extracellular side of the membrane. The N-linked (GlcNAc...) asparagine glycan is linked to N102. The helical transmembrane segment at 124 to 146 (VGLIILSVVFAVCLLACLLGVAL) threads the bilayer. Residues 147-509 (RKFKRRNQER…NSLDKLKTDC (363 aa)) lie on the Cytoplasmic side of the membrane. A GS domain is found at 178-207 (STLADLLDHSCTSGSGSGLPFLVQRTVARQ). One can recognise a Protein kinase domain in the interval 208-502 (ITLLECVGKG…KTLTKIDNSL (295 aa)). ATP is bound by residues 214–222 (VGKGRYGEV) and K235. Catalysis depends on D336, which acts as the Proton acceptor. Phosphoserine is present on S501.

Belongs to the protein kinase superfamily. TKL Ser/Thr protein kinase family. TGFB receptor subfamily. Interacts with FKBP1A. Interacts with FCHO1. Interacts with CLU. Interacts with type II receptors AMHR2 and ACVR2A. Interacts with BMP7. Interacts with GDF2/BMP9. Interacts with BMP6 (when glycosylated); the interaction may induce HAMP expression. Interacts with TSC22D1/TSC-22. Mg(2+) serves as cofactor. It depends on Mn(2+) as a cofactor. Expressed in normal parenchymal cells, endothelial cells, fibroblasts and tumor-derived epithelial cells.

It localises to the membrane. It catalyses the reaction L-threonyl-[receptor-protein] + ATP = O-phospho-L-threonyl-[receptor-protein] + ADP + H(+). The enzyme catalyses L-seryl-[receptor-protein] + ATP = O-phospho-L-seryl-[receptor-protein] + ADP + H(+). Functionally, bone morphogenetic protein (BMP) type I receptor that is involved in a wide variety of biological processes, including bone, heart, cartilage, nervous, and reproductive system development and regulation. As a type I receptor, forms heterotetrameric receptor complexes with the type II receptors AMHR2, ACVR2A or ACVR2B. Upon binding of ligands such as BMP7 or GDF2/BMP9 to the heteromeric complexes, type II receptors transphosphorylate ACVR1 intracellular domain. In turn, ACVR1 kinase domain is activated and subsequently phosphorylates SMAD1/5/8 proteins that transduce the signal. In addition to its role in mediating BMP pathway-specific signaling, suppresses TGFbeta/activin pathway signaling by interfering with the binding of activin to its type II receptor. Besides canonical SMAD signaling, can activate non-canonical pathways such as p38 mitogen-activated protein kinases/MAPKs. May promote the expression of HAMP, potentially via its interaction with BMP6. The polypeptide is Activin receptor type-1 (ACVR1) (Homo sapiens (Human)).